The sequence spans 495 residues: Putative myristoylated membrane protein 458R (495 aa).

Residue G2 is the site of N-myristoyl glycine; by host attachment. N-linked (GlcNAc...) asparagine; by host glycans are attached at residues N58, N71, N72, N103, and N111. A coiled-coil region spans residues 150–182 (HLKEIHKIITKEVENAKNNNKDVTKLIEQFSQA). A run of 2 helical transmembrane segments spans residues 194–214 (ILSL…YVGG) and 216–236 (IAFP…FNWT). N262, N314, N317, N349, and N457 each carry an N-linked (GlcNAc...) asparagine; by host glycan. A helical transmembrane segment spans residues 469 to 489 (LWLLCVAVILLFIGIIGMGLG).

It belongs to the IIV-6 118L/458R family.

It is found in the membrane. The sequence is that of Putative myristoylated membrane protein 458R from Acheta domesticus (House cricket).